The sequence spans 227 residues: ATP synthase F(0) complex subunit a (227 aa).

6 consecutive transmembrane segments (helical) span residues 12–32 (PCLL…LLLP), 69–89 (WALL…LGLL), 98–118 (QLSM…LTGL), 139–159 (IPAL…ALGV), 170–190 (LLIQ…PSIS), and 196–216 (ILFL…YVFV).

This sequence belongs to the ATPase A chain family. Component of the ATP synthase complex composed at least of ATP5F1A/subunit alpha, ATP5F1B/subunit beta, ATP5MC1/subunit c (homooctomer), MT-ATP6/subunit a, MT-ATP8/subunit 8, ATP5ME/subunit e, ATP5MF/subunit f, ATP5MG/subunit g, ATP5MK/subunit k, ATP5MJ/subunit j, ATP5F1C/subunit gamma, ATP5F1D/subunit delta, ATP5F1E/subunit epsilon, ATP5PF/subunit F6, ATP5PB/subunit b, ATP5PD/subunit d, ATP5PO/subunit OSCP. ATP synthase complex consists of a soluble F(1) head domain (subunits alpha(3) and beta(3)) - the catalytic core - and a membrane F(0) domain - the membrane proton channel (subunits c, a, 8, e, f, g, k and j). These two domains are linked by a central stalk (subunits gamma, delta, and epsilon) rotating inside the F1 region and a stationary peripheral stalk (subunits F6, b, d, and OSCP). Interacts with DNAJC30; interaction is direct.

It is found in the mitochondrion inner membrane. The enzyme catalyses H(+)(in) = H(+)(out). Subunit a, of the mitochondrial membrane ATP synthase complex (F(1)F(0) ATP synthase or Complex V) that produces ATP from ADP in the presence of a proton gradient across the membrane which is generated by electron transport complexes of the respiratory chain. ATP synthase complex consist of a soluble F(1) head domain - the catalytic core - and a membrane F(1) domain - the membrane proton channel. These two domains are linked by a central stalk rotating inside the F(1) region and a stationary peripheral stalk. During catalysis, ATP synthesis in the catalytic domain of F(1) is coupled via a rotary mechanism of the central stalk subunits to proton translocation. With the subunit c (ATP5MC1), forms the proton-conducting channel in the F(0) domain, that contains two crucial half-channels (inlet and outlet) that facilitate proton movement from the mitochondrial intermembrane space (IMS) into the matrix. Protons are taken up via the inlet half-channel and released through the outlet half-channel, following a Grotthuss mechanism. The protein is ATP synthase F(0) complex subunit a of Gallus gallus (Chicken).